A 302-amino-acid chain; its full sequence is Sulfate adenylyltransferase subunit 2 (302 aa).

Residues 280-302 (RQGRLIDSDQSASMEQKKRQGYF) are disordered.

Belongs to the PAPS reductase family. CysD subfamily. In terms of assembly, heterodimer composed of CysD, the smaller subunit, and CysN.

It catalyses the reaction sulfate + ATP + H(+) = adenosine 5'-phosphosulfate + diphosphate. It participates in sulfur metabolism; hydrogen sulfide biosynthesis; sulfite from sulfate: step 1/3. With CysN forms the ATP sulfurylase (ATPS) that catalyzes the adenylation of sulfate producing adenosine 5'-phosphosulfate (APS) and diphosphate, the first enzymatic step in sulfur assimilation pathway. APS synthesis involves the formation of a high-energy phosphoric-sulfuric acid anhydride bond driven by GTP hydrolysis by CysN coupled to ATP hydrolysis by CysD. The protein is Sulfate adenylyltransferase subunit 2 of Shewanella baltica (strain OS185).